A 287-amino-acid polypeptide reads, in one-letter code: Outer membrane protein TP0453 (287 aa).

A signal peptide spans 1 to 24 (MIRRRYRGCTQGAWIVSVGMLFAS). The N-palmitoyl cysteine moiety is linked to residue cysteine 25. Cysteine 25 carries the S-diacylglycerol cysteine lipid modification. Amphipathic helix regions lie at residues 36 to 40 (PLGVV), 56 to 63 (ENLISRII), 69 to 77 (KADIKKIVD), 103 to 112 (YAFTNLIFSR), 155 to 162 (MSKMLSRL), 172 to 179 (PRFEKECT), 194 to 202 (GGHFITKLL), 240 to 250 (FPIQFLISRVL), and 270 to 279 (AERLASVISS).

As to quaternary structure, a mix of monomer and dimers; may integrate into the membrane as a dimer. In terms of processing, palmitoylated upon expression of a fusion protein with first 46 residues fused to PhoA in E.coli.

It is found in the cell outer membrane. Its function is as follows. Might be involved in ligand transport, alters membrane permeability at acidic pH (4.0 to 5.5). Incubation of the non-lipidated form with lipid vesicles increases their permeability. The chain is Outer membrane protein TP0453 from Treponema pallidum (strain Nichols).